Reading from the N-terminus, the 72-residue chain is Cytochrome c oxidase subunit 2 (72 aa).

Over 1 to 14 the chain is Mitochondrial intermembrane; sequence MAHPSQLGFQDAAS. A helical transmembrane segment spans residues 15-45; that stretch reads PVMEELLHFHDHALMIVFLISTLVLYIIVAM. Over 46 to 72 the chain is Mitochondrial matrix; that stretch reads VSTKLTNKYXLDSQEIEVIWTXLPAVI.

Belongs to the cytochrome c oxidase subunit 2 family. As to quaternary structure, component of the cytochrome c oxidase (complex IV, CIV), a multisubunit enzyme composed of 14 subunits. The complex is composed of a catalytic core of 3 subunits MT-CO1, MT-CO2 and MT-CO3, encoded in the mitochondrial DNA, and 11 supernumerary subunits COX4I, COX5A, COX5B, COX6A, COX6B, COX6C, COX7A, COX7B, COX7C, COX8 and NDUFA4, which are encoded in the nuclear genome. The complex exists as a monomer or a dimer and forms supercomplexes (SCs) in the inner mitochondrial membrane with NADH-ubiquinone oxidoreductase (complex I, CI) and ubiquinol-cytochrome c oxidoreductase (cytochrome b-c1 complex, complex III, CIII), resulting in different assemblies (supercomplex SCI(1)III(2)IV(1) and megacomplex MCI(2)III(2)IV(2)). Found in a complex with TMEM177, COA6, COX18, COX20, SCO1 and SCO2. Interacts with TMEM177 in a COX20-dependent manner. Interacts with COX20. Interacts with COX16. Requires Cu cation as cofactor.

The protein localises to the mitochondrion inner membrane. It carries out the reaction 4 Fe(II)-[cytochrome c] + O2 + 8 H(+)(in) = 4 Fe(III)-[cytochrome c] + 2 H2O + 4 H(+)(out). In terms of biological role, component of the cytochrome c oxidase, the last enzyme in the mitochondrial electron transport chain which drives oxidative phosphorylation. The respiratory chain contains 3 multisubunit complexes succinate dehydrogenase (complex II, CII), ubiquinol-cytochrome c oxidoreductase (cytochrome b-c1 complex, complex III, CIII) and cytochrome c oxidase (complex IV, CIV), that cooperate to transfer electrons derived from NADH and succinate to molecular oxygen, creating an electrochemical gradient over the inner membrane that drives transmembrane transport and the ATP synthase. Cytochrome c oxidase is the component of the respiratory chain that catalyzes the reduction of oxygen to water. Electrons originating from reduced cytochrome c in the intermembrane space (IMS) are transferred via the dinuclear copper A center (CU(A)) of subunit 2 and heme A of subunit 1 to the active site in subunit 1, a binuclear center (BNC) formed by heme A3 and copper B (CU(B)). The BNC reduces molecular oxygen to 2 water molecules using 4 electrons from cytochrome c in the IMS and 4 protons from the mitochondrial matrix. This is Cytochrome c oxidase subunit 2 (mt-co2) from Gomphosus varius (Bird wrasse).